The following is a 56-amino-acid chain: Small ribosomal subunit protein uS14 (56 aa).

Positions 21, 24, 39, and 42 each coordinate Zn(2+).

Belongs to the universal ribosomal protein uS14 family. Zn(2+) is required as a cofactor.

The sequence is that of Small ribosomal subunit protein uS14 (RPS29) from Eremothecium gossypii (strain ATCC 10895 / CBS 109.51 / FGSC 9923 / NRRL Y-1056) (Yeast).